A 163-amino-acid polypeptide reads, in one-letter code: Nucleotide-binding protein LA_3406 (163 aa).

It belongs to the YajQ family.

Nucleotide-binding protein. The polypeptide is Nucleotide-binding protein LA_3406 (Leptospira interrogans serogroup Icterohaemorrhagiae serovar Lai (strain 56601)).